Reading from the N-terminus, the 199-residue chain is Recombination protein RecR (199 aa).

The C4-type zinc-finger motif lies at 56–71 (CSICFNVSQDDQCRIC). Residues 79–174 (SVLCVVEEYK…RVTRLASGLP (96 aa)) enclose the Toprim domain.

This sequence belongs to the RecR family.

Its function is as follows. May play a role in DNA repair. It seems to be involved in an RecBC-independent recombinational process of DNA repair. It may act with RecF and RecO. This chain is Recombination protein RecR, found in Nocardioides sp. (strain ATCC BAA-499 / JS614).